The chain runs to 462 residues: Glycerol-3-phosphate dehydrogenase [NAD(+)] GPDHC1, cytosolic (462 aa).

Residues 48–53 (GAGAWG), lysine 196, and alanine 235 each bind NAD(+). Position 196 (lysine 196) interacts with substrate. Lysine 285 serves as the catalytic Proton acceptor. Positions 347 and 375 each coordinate NAD(+). 347–348 (RN) provides a ligand contact to substrate.

Belongs to the NAD-dependent glycerol-3-phosphate dehydrogenase family. As to expression, expressed in roots, leaves, flowers and siliques.

It is found in the cytoplasm. The protein localises to the cytosol. The catalysed reaction is sn-glycerol 3-phosphate + NAD(+) = dihydroxyacetone phosphate + NADH + H(+). Involved in cell redox homeostasis. Required for maintaining a steady state cellular NADH/NAD(+) ratio through a mitochondrial glycerol-3-phosphate redox shuttle. May function with the mitochondrial FAD-dependent glycerol-3-phosphate dehydrogenase SDP6 to shuttle reducing equivalents into the mitochondria for respiration. This is Glycerol-3-phosphate dehydrogenase [NAD(+)] GPDHC1, cytosolic (GPDHC1) from Arabidopsis thaliana (Mouse-ear cress).